The primary structure comprises 82 residues: uncharacterized protein (82 aa).

Positions 55 to 64 (DQNTAPSTPS) are enriched in polar residues. The disordered stretch occupies residues 55–82 (DQNTAPSTPSKILPKRLPSQSNLNNNNN).

This is an uncharacterized protein from Dictyostelium discoideum (Social amoeba).